The chain runs to 432 residues: MTAQPEIHLMAGGQDWDEIVTAAGQATDERIVVNMGPQHPSTHGVLRLILEIEGETVTDVRCGIGYLHTGIEKNLEYRTWTQGVTFVTRMDYLSPFFNETAYCLGVEQLLGIADEIPERANVIRVLMMELNRISSHLVALATGGMELGAMTAMFLGFREREMILKVFEAITGLRMNHAYVRPGGLAQDLPDGAEQEVRDLLEILPGRLRDMENLLNENYIWKARTQGVGYLDLTGCMALGITGPVLRATGLAHDLRRAQPYCGYENYDFDVVTHQDCDSYGRYLIRVKEMHESIKIAQQCVDRLRPGPVMVDDKKIAWPADLASGPDGLGNSPKHIAKIMGTSMEGLIHHFKLVTEGVRVPAGQVYVAIESPRGELGVHMVSDGGTRPYRVHFRDPSFTNLQSVAAMCEGAMVADLIAAVASIDPVMGGVDR.

This sequence belongs to the complex I 49 kDa subunit family. In terms of assembly, NDH-1 is composed of 14 different subunits. Subunits NuoB, C, D, E, F, and G constitute the peripheral sector of the complex.

It is found in the cell membrane. It carries out the reaction a quinone + NADH + 5 H(+)(in) = a quinol + NAD(+) + 4 H(+)(out). In terms of biological role, NDH-1 shuttles electrons from NADH, via FMN and iron-sulfur (Fe-S) centers, to quinones in the respiratory chain. The immediate electron acceptor for the enzyme in this species is believed to be a menaquinone. Couples the redox reaction to proton translocation (for every two electrons transferred, four hydrogen ions are translocated across the cytoplasmic membrane), and thus conserves the redox energy in a proton gradient. In Mycobacteroides abscessus (strain ATCC 19977 / DSM 44196 / CCUG 20993 / CIP 104536 / JCM 13569 / NCTC 13031 / TMC 1543 / L948) (Mycobacterium abscessus), this protein is NADH-quinone oxidoreductase subunit D.